The following is a 242-amino-acid chain: Tryptophan synthase alpha chain (242 aa).

Catalysis depends on proton acceptor residues Glu31 and Asp42.

The protein belongs to the TrpA family. In terms of assembly, tetramer of two alpha and two beta chains.

It catalyses the reaction (1S,2R)-1-C-(indol-3-yl)glycerol 3-phosphate + L-serine = D-glyceraldehyde 3-phosphate + L-tryptophan + H2O. Its pathway is amino-acid biosynthesis; L-tryptophan biosynthesis; L-tryptophan from chorismate: step 5/5. The alpha subunit is responsible for the aldol cleavage of indoleglycerol phosphate to indole and glyceraldehyde 3-phosphate. The chain is Tryptophan synthase alpha chain from Staphylococcus aureus (strain USA300).